Reading from the N-terminus, the 601-residue chain is Elongation factor 4 (601 aa).

The tr-type G domain occupies 5-187 (EHIRNFSIIA…AIVERLPAPE (183 aa)). Residues 17-22 (DHGKST) and 134-137 (NKVD) each bind GTP.

Belongs to the TRAFAC class translation factor GTPase superfamily. Classic translation factor GTPase family. LepA subfamily.

It is found in the cell inner membrane. The catalysed reaction is GTP + H2O = GDP + phosphate + H(+). Its function is as follows. Required for accurate and efficient protein synthesis under certain stress conditions. May act as a fidelity factor of the translation reaction, by catalyzing a one-codon backward translocation of tRNAs on improperly translocated ribosomes. Back-translocation proceeds from a post-translocation (POST) complex to a pre-translocation (PRE) complex, thus giving elongation factor G a second chance to translocate the tRNAs correctly. Binds to ribosomes in a GTP-dependent manner. The sequence is that of Elongation factor 4 from Nitratidesulfovibrio vulgaris (strain DSM 19637 / Miyazaki F) (Desulfovibrio vulgaris).